The primary structure comprises 311 residues: Phospholipid phosphatase 3 (311 aa).

Over 1–33 (MQNYKYDKAIVPESKNGGSPALNNNPRRSGSKR) the chain is Cytoplasmic. S19 is subject to Phosphoserine. Residues 34-54 (VLLICLDLFCLFMAGLPFLII) form a helical membrane-spanning segment. The Extracellular portion of the chain corresponds to 55–85 (ETSTIKPYHRGFYCNDESIKYPLKTGETIND). A helical transmembrane segment spans residues 86 to 106 (AVLCAVGIVIAILAIITGEFY). At 107–122 (RIYYLKKSRSTIQNPY) the chain is on the cytoplasmic side. Residues 109–110 (YY) carry the Dityrosine basolateral targeting motif motif. A helical membrane pass occupies residues 123 to 143 (VAALYKQVGCFLFGCAISQSF). The Extracellular portion of the chain corresponds to 144–193 (TDIAKVSIGRLRPHFLSVCNPDFSQINCSEGYIQNYRCRGDDSKVQEARK). The interval 148–156 (KVSIGRLRP) is phosphatase sequence motif I. The N-linked (GlcNAc...) asparagine glycan is linked to N170. The Integrin-binding motif signature appears at 182–184 (RGD). A helical transmembrane segment spans residues 194–214 (SFFSGHASFSMYTMLYLVLYL). Positions 196–199 (FSGH) are phosphatase sequence motif II. Catalysis depends on H199, which acts as the Proton donors. Residues 215–225 (QARFTWRGARL) lie on the Cytoplasmic side of the membrane. Residues 226 to 243 (LRPLLQFTLIMMAFYTGL) form a helical membrane-spanning segment. Residues 244–255 (SRVSDHKHHPSD) form a phosphatase sequence motif III region. The Extracellular segment spans residues 244-257 (SRVSDHKHHPSDVL). The active-site Nucleophile is H251. A helical transmembrane segment spans residues 258-278 (AGFAQGALVACCIVFFVSDLF). Residues 275-311 (SDLFKTKTTLSLPAPAIRKEILSPVDIIDRNNHHNMM) form a mediates interaction with CTNND1 region. Residues 279-311 (KTKTTLSLPAPAIRKEILSPVDIIDRNNHHNMM) are Cytoplasmic-facing.

Belongs to the PA-phosphatase related phosphoesterase family. In terms of assembly, forms functional homodimers and homooligomers that are not required for substrate recognition and catalytic activity. Can also form heterooligomers with other PLPP2 and PLPP3. Interacts with CTNND1; negatively regulates the PLPP3-mediated stabilization of beta-catenin/CTNNB1. Post-translationally, N-glycosylated. Contains high-mannose oligosaccharides. Ubiquitously expressed. Highly expressed in heart and placenta.

The protein localises to the cell membrane. It localises to the basolateral cell membrane. It is found in the endoplasmic reticulum membrane. The protein resides in the endoplasmic reticulum-Golgi intermediate compartment membrane. Its subcellular location is the golgi apparatus membrane. The protein localises to the golgi apparatus. It localises to the trans-Golgi network membrane. It is found in the membrane raft. It carries out the reaction a 1,2-diacyl-sn-glycero-3-phosphate + H2O = a 1,2-diacyl-sn-glycerol + phosphate. The enzyme catalyses 1,2-dihexadecanoyl-sn-glycero-3-phosphate + H2O = 1,2-dihexadecanoyl-sn-glycerol + phosphate. The catalysed reaction is 1,2-di-(9Z-octadecenoyl)-sn-glycero-3-phosphate + H2O = 1,2-di-(9Z-octadecenoyl)-sn-glycerol + phosphate. It catalyses the reaction a monoacyl-sn-glycero-3-phosphate + H2O = a monoacylglycerol + phosphate. It carries out the reaction (9Z)-octadecenoyl-sn-glycero-3-phosphate + H2O = (9Z-octadecenoyl)-glycerol + phosphate. The enzyme catalyses sphing-4-enine 1-phosphate + H2O = sphing-4-enine + phosphate. The catalysed reaction is an N-acylsphing-4-enine 1-phosphate + H2O = an N-acylsphing-4-enine + phosphate. It catalyses the reaction N-(octanoyl)-sphing-4-enine-1-phosphate + H2O = N-octanoylsphing-4-enine + phosphate. It carries out the reaction N-(9Z-octadecenoyl)-ethanolamine phosphate + H2O = N-(9Z-octadecenoyl) ethanolamine + phosphate. It participates in lipid metabolism; phospholipid metabolism. With respect to regulation, magnesium-independent phospholipid phosphatase. Insensitive to N-ethylmaleimide. Inhibited by sphingosine, zinc ions and modestly by propanolol. Functionally, magnesium-independent phospholipid phosphatase of the plasma membrane that catalyzes the dephosphorylation of a variety of glycerolipid and sphingolipid phosphate esters including phosphatidate/PA, lysophosphatidate/LPA, diacylglycerol pyrophosphate/DGPP, sphingosine 1-phosphate/S1P and ceramide 1-phosphate/C1P. Also acts on N-oleoyl ethanolamine phosphate/N-(9Z-octadecenoyl)-ethanolamine phosphate, a potential physiological compound. Has both an extracellular and an intracellular phosphatase activity, allowing the hydrolysis and the cellular uptake of these bioactive lipid mediators from the milieu, regulating signal transduction in different cellular processes. Through the dephosphorylation of extracellular sphingosine-1-phosphate and the regulation of its extra- and intracellular availability, plays a role in vascular homeostasis, regulating endothelial cell migration, adhesion, survival, proliferation and the production of pro-inflammatory cytokines. By maintaining the appropriate levels of this lipid in the cerebellum, also ensure its proper development and function. Through its intracellular lipid phosphatase activity may act in early compartments of the secretory pathway, regulating the formation of Golgi to endoplasmic reticulum retrograde transport carriers. Its function is as follows. Independently of this phosphatase activity may also function in the Wnt signaling pathway and the stabilization of beta-catenin/CTNNB1, thereby regulating cell proliferation, migration and differentiation in angiogenesis or yet in tumor growth. Also plays a role in integrin-mediated cell-cell adhesion in angiogenesis. The sequence is that of Phospholipid phosphatase 3 from Homo sapiens (Human).